A 619-amino-acid chain; its full sequence is MKMQTLNFTSSLLFLSFIFLSCALLISSQQSPSQPHSEPPSQLPFEPPVESPFFPPSQPPIFVPPSQPPSLPPSQSQSPSLACKSTPYPKLCRTILNAVKSSPSDPYRYGKFTIKQCLKQASRLSKVITSYARRVESKPGSATAEEIGAVADCGELSELSVNYLETVTTELKTAQVMTAALVEHVNSLLSGVVTNQQTCLDGLVEAKSGFAAAIGSPMGNLTRLYSISLGLVSHALNRNLKRFKASKGKILGGGNSTYREPLETLIKGLRKTCDNDKDCRKTSRNLGELGETSGGSILVSKAVIVGPFKSDNFTTITDAIAAAPNNTRPEDGYFVIYAREGVYEEYIVVPINKKNLMLMGDGINKTIITGNHNVVDGWTTYNCSSFAVVGERFMAVDVTFRNTAGPEKHQAVALRNNAEGSSFYRCSFEGYQDTLYVHSLRQFYRECDIYGTVDFIFGNAAAIFQNCNIYARKPMAKQKNAITAHGRLDPNQNTGISIINCTIKAAPDLAAEPKSAMTFLGRPWKPYSRTVFMQSYISDIVQPVGWLEWNGTIGLDTIYYGEYSNFGPGANTNQRVQWLGYNLLNLAEAMNFTVYNFTMGDTWLPQTDIPFYGGLLSKE.

Residues 1–23 form the signal peptide; sequence MKMQTLNFTSSLLFLSFIFLSCA. The segment at 31–84 is disordered; that stretch reads SPSQPHSEPPSQLPFEPPVESPFFPPSQPPIFVPPSQPPSLPPSQSQSPSLACK. Pro residues predominate over residues 37–72; that stretch reads SEPPSQLPFEPPVESPFFPPSQPPIFVPPSQPPSLP. The pectinesterase inhibitor 25 stretch occupies residues 73–231; the sequence is PSQSQSPSLA…TRLYSISLGL (159 aa). N-linked (GlcNAc...) asparagine glycosylation is found at asparagine 220, asparagine 255, asparagine 312, asparagine 325, and asparagine 364. The tract at residues 302 to 601 is pectinesterase 25; it reads AVIVGPFKSD…FTVYNFTMGD (300 aa). Threonine 380 is a substrate binding site. Residue asparagine 382 is glycosylated (N-linked (GlcNAc...) asparagine). A substrate-binding site is contributed by glutamine 410. Catalysis depends on aspartate 433, which acts as the Proton donor; for pectinesterase activity. A disulfide bridge connects residues cysteine 447 and cysteine 467. The active-site Nucleophile; for pectinesterase activity is aspartate 454. An N-linked (GlcNAc...) asparagine glycan is attached at asparagine 500. 2 residues coordinate substrate: arginine 522 and tryptophan 524. N-linked (GlcNAc...) asparagine glycans are attached at residues asparagine 550, asparagine 591, and asparagine 596.

This sequence in the N-terminal section; belongs to the PMEI family. It in the C-terminal section; belongs to the pectinesterase family. As to expression, expressed in siliques.

The protein localises to the secreted. It is found in the cell wall. It carries out the reaction [(1-&gt;4)-alpha-D-galacturonosyl methyl ester](n) + n H2O = [(1-&gt;4)-alpha-D-galacturonosyl](n) + n methanol + n H(+). The protein operates within glycan metabolism; pectin degradation; 2-dehydro-3-deoxy-D-gluconate from pectin: step 1/5. Functionally, acts in the modification of cell walls via demethylesterification of cell wall pectin. The sequence is that of Probable pectinesterase/pectinesterase inhibitor 25 (PME25) from Arabidopsis thaliana (Mouse-ear cress).